Here is a 173-residue protein sequence, read N- to C-terminus: Transcription factor E (173 aa).

The 84-residue stretch at 3 to 86 folds into the HTH TFE/IIEalpha-type domain; that stretch reads DDPLVKSLLT…SWKFEEQEVI (84 aa).

Belongs to the TFE family. Monomer. Interaction with RNA polymerase subunits RpoF and RpoE is necessary for Tfe stimulatory transcription activity. Able to interact with Tbp and RNA polymerase in the absence of DNA promoter. Interacts both with the preinitiation and elongation complexes.

Functionally, transcription factor that plays a role in the activation of archaeal genes transcribed by RNA polymerase. Facilitates transcription initiation by enhancing TATA-box recognition by TATA-box-binding protein (Tbp), and transcription factor B (Tfb) and RNA polymerase recruitment. Not absolutely required for transcription in vitro, but particularly important in cases where Tbp or Tfb function is not optimal. It dynamically alters the nucleic acid-binding properties of RNA polymerases by stabilizing the initiation complex and destabilizing elongation complexes. Seems to translocate with the RNA polymerase following initiation and acts by binding to the non template strand of the transcription bubble in elongation complexes. The polypeptide is Transcription factor E (Methanobrevibacter smithii (strain ATCC 35061 / DSM 861 / OCM 144 / PS)).